The sequence spans 219 residues: MSATIRTGLLGGSFNPAHGGHRRISLFALQALRLDEVWWLVSPGNPLKSADGMASHEARYRSALEQARRAPIRVTAIEAQLGTRYTVDTLRTLRGRYPRREFVWLMGADNLATFHRWKAWRDIARTMPIAVVARPGYDKDAIASPAMAWLRGHRTSAAEFRSRGRWSAPTLVTLRFDPDSRSATAIRRADPDWPSRYRSGLLFDQVTHRSIFGEREPPA.

This sequence belongs to the NadD family.

The enzyme catalyses nicotinate beta-D-ribonucleotide + ATP + H(+) = deamido-NAD(+) + diphosphate. Its pathway is cofactor biosynthesis; NAD(+) biosynthesis; deamido-NAD(+) from nicotinate D-ribonucleotide: step 1/1. Functionally, catalyzes the reversible adenylation of nicotinate mononucleotide (NaMN) to nicotinic acid adenine dinucleotide (NaAD). This is Probable nicotinate-nucleotide adenylyltransferase from Erythrobacter litoralis (strain HTCC2594).